Here is a 268-residue protein sequence, read N- to C-terminus: 4-hydroxy-tetrahydrodipicolinate reductase (268 aa).

7-12 (GANGRM) is a binding site for NAD(+). Arginine 34 provides a ligand contact to NADP(+). Residues 97-99 (GTT) and 121-124 (SENM) each bind NAD(+). Histidine 155 serves as the catalytic Proton donor/acceptor. Residue histidine 156 coordinates (S)-2,3,4,5-tetrahydrodipicolinate. Catalysis depends on lysine 159, which acts as the Proton donor. A (S)-2,3,4,5-tetrahydrodipicolinate-binding site is contributed by 165–166 (GT).

Belongs to the DapB family.

It localises to the cytoplasm. The catalysed reaction is (S)-2,3,4,5-tetrahydrodipicolinate + NAD(+) + H2O = (2S,4S)-4-hydroxy-2,3,4,5-tetrahydrodipicolinate + NADH + H(+). The enzyme catalyses (S)-2,3,4,5-tetrahydrodipicolinate + NADP(+) + H2O = (2S,4S)-4-hydroxy-2,3,4,5-tetrahydrodipicolinate + NADPH + H(+). Its pathway is amino-acid biosynthesis; L-lysine biosynthesis via DAP pathway; (S)-tetrahydrodipicolinate from L-aspartate: step 4/4. Its function is as follows. Catalyzes the conversion of 4-hydroxy-tetrahydrodipicolinate (HTPA) to tetrahydrodipicolinate. This is 4-hydroxy-tetrahydrodipicolinate reductase from Bartonella bacilliformis (strain ATCC 35685 / KC583 / Herrer 020/F12,63).